A 692-amino-acid chain; its full sequence is Elongation factor G (692 aa).

Residues 8–283 form the tr-type G domain; sequence EDYRNFGIMA…AVVDYLPSPL (276 aa). Residues 17–24, 81–85, and 135–138 contribute to the GTP site; these read AHIDAGKT, DTPGH, and NKMD.

It belongs to the TRAFAC class translation factor GTPase superfamily. Classic translation factor GTPase family. EF-G/EF-2 subfamily.

The protein localises to the cytoplasm. In terms of biological role, catalyzes the GTP-dependent ribosomal translocation step during translation elongation. During this step, the ribosome changes from the pre-translocational (PRE) to the post-translocational (POST) state as the newly formed A-site-bound peptidyl-tRNA and P-site-bound deacylated tRNA move to the P and E sites, respectively. Catalyzes the coordinated movement of the two tRNA molecules, the mRNA and conformational changes in the ribosome. The sequence is that of Elongation factor G from Caulobacter sp. (strain K31).